The primary structure comprises 508 residues: Glycerol kinase (508 aa).

An ADP-binding site is contributed by Thr14. Residues Thr14, Thr15, and Ser16 each coordinate ATP. Thr14 contributes to the sn-glycerol 3-phosphate binding site. ADP is bound at residue Arg18. Residues Arg84, Glu85, Tyr136, and Asp245 each contribute to the sn-glycerol 3-phosphate site. Residues Arg84, Glu85, Tyr136, Asp245, and Gln246 each contribute to the glycerol site. ADP is bound by residues Thr267 and Gly314. ATP is bound by residues Thr267, Gly314, and Gln318. Asn419 is a binding site for ADP.

Belongs to the FGGY kinase family.

The enzyme catalyses glycerol + ATP = sn-glycerol 3-phosphate + ADP + H(+). It participates in polyol metabolism; glycerol degradation via glycerol kinase pathway; sn-glycerol 3-phosphate from glycerol: step 1/1. With respect to regulation, inhibited by fructose 1,6-bisphosphate (FBP). Key enzyme in the regulation of glycerol uptake and metabolism. Catalyzes the phosphorylation of glycerol to yield sn-glycerol 3-phosphate. The sequence is that of Glycerol kinase from Bordetella pertussis (strain Tohama I / ATCC BAA-589 / NCTC 13251).